Consider the following 502-residue polypeptide: Betaine aldehyde dehydrogenase, chloroplastic (502 aa).

Residues 1–7 (MAFPIPA) constitute a chloroplast transit peptide. 240-245 (GSSATG) is an NAD(+) binding site. The Proton acceptor role is filled by glutamate 262. The active-site Nucleophile is the cysteine 296.

It belongs to the aldehyde dehydrogenase family. Homodimer.

The protein localises to the plastid. It localises to the chloroplast. It carries out the reaction betaine aldehyde + NAD(+) + H2O = glycine betaine + NADH + 2 H(+). It functions in the pathway amine and polyamine biosynthesis; betaine biosynthesis via choline pathway; betaine from betaine aldehyde: step 1/1. This is Betaine aldehyde dehydrogenase, chloroplastic from Atriplex hortensis (Mountain spinach).